The following is a 340-amino-acid chain: Acidic endochitinase WIN6 (340 aa).

Positions 1–22 (MSVWALFAFFSLFLSLSVRGSA) are cleaved as a signal peptide. The Chitin-binding type-1 domain maps to 23 to 63 (EQCGRQAGDALCPGGLCCSSYGWCGTTVDYCGIGCQSQCDG). Disulfide bonds link Cys25–Cys40, Cys34–Cys46, Cys39–Cys53, and Cys57–Cys61. Positions 64 to 85 (GGGGDGGDDGCDGGDDGGGDGD) are spacer. The tract at residues 86–340 (DGYLSDIIPK…YGLSGLKDTM (255 aa)) is chitinase. Cystine bridges form between Cys110-Cys172, Cys183-Cys191, and Cys290-Cys323. The Proton donor role is filled by Glu154.

The protein belongs to the glycosyl hydrolase 19 family. Chitinase class I subfamily.

The enzyme catalyses Random endo-hydrolysis of N-acetyl-beta-D-glucosaminide (1-&gt;4)-beta-linkages in chitin and chitodextrins.. Functionally, defense against chitin-containing fungal pathogens. This chain is Acidic endochitinase WIN6 (WIN6), found in Populus trichocarpa (Western balsam poplar).